Consider the following 55-residue polypeptide: Large ribosomal subunit protein bL33 (55 aa).

This sequence belongs to the bacterial ribosomal protein bL33 family.

The polypeptide is Large ribosomal subunit protein bL33 (Leifsonia xyli subsp. xyli (strain CTCB07)).